Reading from the N-terminus, the 945-residue chain is Poly [ADP-ribose] polymerase 1 (945 aa).

A PARP-type 1 zinc finger spans residues 10-96 (YAIEYAKSGR…KLRQEIQHFK (87 aa)). 4 residues coordinate Zn(2+): C22, C25, H54, and C57. The PARP-type 2; degenerate zinc finger occupies 117–183 (IKTEKSLSNR…DYEENFKIKA (67 aa)). Residues 195-251 (RRSTEPATPASASPTPPEAETPVLSAEGSPESSNKRPASSEIIEIDGEGNPDENDFA) are disordered. Positions 237-248 (IEIDGEGNPDEN) are enriched in acidic residues. Positions 258–397 (KEARLMEVQK…NQMSERLYIG (140 aa)) constitute a PADR1 zinc-binding domain. The tract at residues 324–369 (GCPIICQTCSNGKIVYNSSCRTYVCTGYATEYSKCTYESKNPIRTP) is zinc ribbon. Residues C329, C332, C348, and C358 each contribute to the Zn(2+) site. The region spanning 464-563 (RCHVFKNEID…KHFRKMPGMF (100 aa)) is the WGR domain. Residues 586-704 (KTLLPKSVKE…DIKFAYDQIS (119 aa)) enclose the PARP alpha-helical domain. The region spanning 717–945 (DPVDINYQKL…RVKMHHARHL (229 aa)) is the PARP catalytic domain.

Belongs to the ARTD/PARP family.

Its subcellular location is the nucleus. It catalyses the reaction NAD(+) + (ADP-D-ribosyl)n-acceptor = nicotinamide + (ADP-D-ribosyl)n+1-acceptor + H(+).. It carries out the reaction L-aspartyl-[protein] + NAD(+) = 4-O-(ADP-D-ribosyl)-L-aspartyl-[protein] + nicotinamide. The catalysed reaction is L-glutamyl-[protein] + NAD(+) = 5-O-(ADP-D-ribosyl)-L-glutamyl-[protein] + nicotinamide. Inhibited by N-(6-oxo-5,6-dihydrophenanthridin-2-yl)-N,N-dimethylacetamide HCl (PJ34), 1,5-dihydroxyisoquinoline (DHQ) and 3-aminobenzamide (3AB). Functionally, poly[ADP-ribose] polymerase modifies various nuclear proteins by poly(ADP-ribosyl)ation, a post-translational modification synthesized after DNA damage that appears as an obligatory step in a detection/signaling pathway leading to the reparation of DNA strand breaks and programmed cell death. Involved in protection of the genome against mutations. This chain is Poly [ADP-ribose] polymerase 1, found in Caenorhabditis elegans.